Consider the following 280-residue polypeptide: Transcription factor MYB46 (280 aa).

2 consecutive HTH myb-type domains span residues 15–67 (VKKM…INYL) and 68–122 (RPDL…KKRL). 2 DNA-binding regions (H-T-H motif) span residues 43–67 (WSDV…INYL) and 95–118 (WSQI…NSTI). The segment at 129-150 (SNLINNSSSSPNTASDSSSNSA) is disordered.

Expressed at low levels in stems and siliques, specifically in xylem.

It is found in the nucleus. In terms of biological role, transcription activator. Involved in the regulation of secondary wall biosynthesis in fibers and vessels. Transcription activator of the mannan synthase CSLA9 that recognizes and binds to the DNA consensus sequence 5'-[AG][GT]T[AT]GGT[GA]-3' cis-regulatory element of CSLA9 promoter. Transcription factor that acts as a molecular switch in the NAC012/SND1-mediated transcriptional network regulating secondary wall biosynthesis. Is directly activated by NAC012/SND1. Functions redundantly with MYB83 in the transcriptional regulatory cascade leading to secondary wall formation in fibers and vessels. Transcription activator that binds to the DNA consensus sequence 5'-ACC[AT]A[AC][TC]-3', designated as the secondary wall MYB-responsive element (SMRE). Regulates directly numerous transcription factors and a number of genes involved in secondary wall biosynthesis that contain SMRE elements in their promoters. Is an obligate component of the transcriptional regulatory complex toward the commitment of secondary wall cellulose synthesis. Is required for functional expression of the three secondary wall CESA genes, CESA4, CESA7 and CESA8. The sequence is that of Transcription factor MYB46 from Arabidopsis thaliana (Mouse-ear cress).